The sequence spans 808 residues: Protein translocase subunit SecA 2 (808 aa).

ATP is bound by residues Gln124, 142 to 146 (GEGKT), and Asp535.

Belongs to the SecA family. In terms of assembly, monomer and homodimer. Part of the essential Sec protein translocation apparatus which comprises SecA, SecYEG and auxiliary proteins SecDF. Other proteins may also be involved.

Its subcellular location is the cell membrane. It is found in the cytoplasm. The catalysed reaction is ATP + H2O + cellular proteinSide 1 = ADP + phosphate + cellular proteinSide 2.. Its function is as follows. Part of the Sec protein translocase complex. Interacts with the SecYEG preprotein conducting channel. Has a central role in coupling the hydrolysis of ATP to the transfer of proteins into and across the cell membrane, serving as an ATP-driven molecular motor driving the stepwise translocation of polypeptide chains across the membrane. The polypeptide is Protein translocase subunit SecA 2 (Mycobacterium bovis (strain BCG / Pasteur 1173P2)).